We begin with the raw amino-acid sequence, 255 residues long: Protein N-terminal and lysine N-methyltransferase efm7 (255 aa).

The segment at 1 to 25 (MADNDFEGFGIFEEPEGFRPSTPPP) is disordered. Residues tryptophan 58, 84 to 86 (GAG), aspartate 106, tryptophan 137, and serine 162 each bind S-adenosyl-L-methionine.

Belongs to the class I-like SAM-binding methyltransferase superfamily. EFM7 family.

It localises to the cytoplasm. In terms of biological role, S-adenosyl-L-methionine-dependent protein methyltransferase that trimethylates the N-terminal glycine 'Gly-2' of elongation factor 1-alpha, before also catalyzing the mono- and dimethylation of 'Lys-3'. This Schizosaccharomyces pombe (strain 972 / ATCC 24843) (Fission yeast) protein is Protein N-terminal and lysine N-methyltransferase efm7.